We begin with the raw amino-acid sequence, 202 residues long: uncharacterized protein (202 aa).

Lys136 participates in a covalent cross-link: Isoglutamyl lysine isopeptide (Lys-Gln) (interchain with Q-Cter in protein Pup).

This is an uncharacterized protein from Mycobacterium tuberculosis (strain CDC 1551 / Oshkosh).